A 497-amino-acid polypeptide reads, in one-letter code: Apolipoprotein N-acyltransferase (497 aa).

6 helical membrane passes run 21–41 (FAPF…ALLW), 51–71 (ALTG…WLYV), 85–105 (VLAL…TGWI), 119–139 (GMVA…FTGF), 157–177 (FAPV…AAWL), and 189–209 (FWLG…IHWT). Residues 221-461 (LQGNIPQNMK…GLHSTAQGFG (241 aa)) enclose the CN hydrolase domain. The active-site Proton acceptor is the Glu-259. Lys-319 is an active-site residue. Cys-371 (nucleophile) is an active-site residue. A helical membrane pass occupies residues 472 to 492 (SLVFALIGLLLLAGSLAAFSG).

Belongs to the CN hydrolase family. Apolipoprotein N-acyltransferase subfamily.

Its subcellular location is the cell inner membrane. It carries out the reaction N-terminal S-1,2-diacyl-sn-glyceryl-L-cysteinyl-[lipoprotein] + a glycerophospholipid = N-acyl-S-1,2-diacyl-sn-glyceryl-L-cysteinyl-[lipoprotein] + a 2-acyl-sn-glycero-3-phospholipid + H(+). It functions in the pathway protein modification; lipoprotein biosynthesis (N-acyl transfer). Functionally, catalyzes the phospholipid dependent N-acylation of the N-terminal cysteine of apolipoprotein, the last step in lipoprotein maturation. The sequence is that of Apolipoprotein N-acyltransferase from Nitrosomonas europaea (strain ATCC 19718 / CIP 103999 / KCTC 2705 / NBRC 14298).